A 227-amino-acid polypeptide reads, in one-letter code: DNA repair protein RecO (227 aa).

Belongs to the RecO family.

Involved in DNA repair and RecF pathway recombination. The chain is DNA repair protein RecO from Pseudomonas entomophila (strain L48).